Here is a 105-residue protein sequence, read N- to C-terminus: Thioredoxin (105 aa).

Residues 2–105 (VKQIESKYAF…KLEATINELI (104 aa)) enclose the Thioredoxin domain. At Lys-3 the chain carries N6-acetyllysine. N6-succinyllysine is present on Lys-8. Active-site nucleophile residues include Cys-32 and Cys-35. A disulfide bridge links Cys-32 with Cys-35. N6-acetyllysine is present on Lys-39. Cys-62 and Cys-69 each carry S-nitrosocysteine. Cys-73 is subject to S-nitrosocysteine; alternate. Lys-94 is modified (N6-acetyllysine; alternate). At Lys-94 the chain carries N6-succinyllysine; alternate.

This sequence belongs to the thioredoxin family. In terms of assembly, homodimer; disulfide-linked. Interacts with TXNIP through the redox-active site. Interacts with MAP3K5 and CASP3. Interacts with APEX1; the interaction stimulates the FOS/JUN AP-1 DNA-binding activity in a redox-dependent manner. In terms of processing, in the fully reduced protein, both Cys-69 and Cys-73 are nitrosylated in response to nitric oxide (NO). When two disulfide bonds are present in the protein, only Cys-73 is nitrosylated. Cys-73 can serve as donor for nitrosylation of target proteins.

It is found in the nucleus. Its subcellular location is the cytoplasm. The protein localises to the secreted. Functionally, participates in various redox reactions through the reversible oxidation of its active center dithiol to a disulfide and catalyzes dithiol-disulfide exchange reactions. Plays a role in the reversible S-nitrosylation of cysteine residues in target proteins, and thereby contributes to the response to intracellular nitric oxide. Nitrosylates the active site Cys of CASP3 in response to nitric oxide (NO), and thereby inhibits caspase-3 activity. Induces the FOS/JUN AP-1 DNA binding activity in ionizing radiation (IR) cells through its oxidation/reduction status and stimulates AP-1 transcriptional activity. This chain is Thioredoxin (TXN), found in Ovis aries (Sheep).